Consider the following 365-residue polypeptide: 1-acyl-sn-glycerol-3-phosphate acyltransferase epsilon (365 aa).

A helical transmembrane segment spans residues 15–35 (LLPSVLLLGSAPTYLLAWTLW). Positions 93-98 (HQSTVD) match the HXXXXD motif motif. The helical transmembrane segment at 345-365 (LYMGTWLYGTLLGCLWFVIKA) threads the bilayer.

It belongs to the 1-acyl-sn-glycerol-3-phosphate acyltransferase family. Widely expressed.

The protein localises to the endoplasmic reticulum membrane. Its subcellular location is the nucleus envelope. The protein resides in the mitochondrion. The catalysed reaction is a 1-acyl-sn-glycero-3-phosphate + an acyl-CoA = a 1,2-diacyl-sn-glycero-3-phosphate + CoA. It carries out the reaction 1-(9Z-octadecenoyl)-sn-glycero-3-phosphate + tetradecanoyl-CoA = 1-(9Z)-octadecenoyl-2-tetradecanoyl-sn-glycero-3-phosphate + CoA. It catalyses the reaction pentadecanoyl-CoA + 1-(9Z-octadecenoyl)-sn-glycero-3-phosphate = 1-(9Z)-octadecenoyl-2-pentadecanoyl-sn-glycero-3-phosphate + CoA. The enzyme catalyses 1-(9Z-octadecenoyl)-sn-glycero-3-phosphate + octadecanoyl-CoA = 1-(9Z-octadecenoyl)-2-octadecanoyl-sn-glycero-3-phosphate + CoA. The catalysed reaction is nonadecanoyl-CoA + 1-(9Z-octadecenoyl)-sn-glycero-3-phosphate = 1-(9Z)-octadecenoyl-2-nonadecanoyl-sn-glycero-3-phosphate + CoA. It carries out the reaction 1-(9Z-octadecenoyl)-sn-glycero-3-phosphoethanolamine + (9Z)-octadecenoyl-CoA = 1,2-di-(9Z-octadecenoyl)-sn-glycero-3-phosphoethanolamine + CoA. It catalyses the reaction 1-(9Z-octadecenoyl)-sn-glycero-3-phosphocholine + (9Z)-octadecenoyl-CoA = 1,2-di-(9Z-octadecenoyl)-sn-glycero-3-phosphocholine + CoA. The enzyme catalyses 1-(9Z-octadecenoyl)-sn-glycero-3-phospho-(1D-myo-inositol) + (5Z,8Z,11Z,14Z)-eicosatetraenoyl-CoA = 1-(9Z-octadecenoyl)-2-(5Z,8Z,11Z,14Z-eicosatetraenoyl)-sn-glycero-3-phospho-1D-myo-inositol + CoA. The catalysed reaction is 1-(9Z-octadecenoyl)-sn-glycero-3-phospho-L-serine + (9Z)-octadecenoyl-CoA = 1,2-di-(9Z)-octadecenoyl-sn-glycero-3-phospho-L-serine + CoA. It carries out the reaction 1-(9Z-octadecenoyl)-sn-glycero-3-phospho-L-serine + (5Z,8Z,11Z,14Z)-eicosatetraenoyl-CoA = 1-(9Z-octadecenoyl)-2-(5Z,8Z,11Z,14Z-eicosatetraenoyl)-sn-glycero-3-phospho-L-serine + CoA. It catalyses the reaction 1-hexadecanoyl-sn-glycero-3-phosphate + (9Z)-octadecenoyl-CoA = 1-hexadecanoyl-2-(9Z-octadecenoyl)-sn-glycero-3-phosphate + CoA. The enzyme catalyses 1-heptadecanoyl-sn-glycero-3-phosphate + (9Z)-octadecenoyl-CoA = 1-heptadecanoyl-2-(9Z)-octadecenoyl-sn-glycero-3-phosphate + CoA. The catalysed reaction is 1-(5Z,8Z,11Z,14Z-eicosatetraenoyl)-sn-glycero-3-phosphate + (9Z)-octadecenoyl-CoA = 1-(5Z,8Z,11Z,14Z)-eicosatetraenoyl-2-(9Z)-octadecenoyl-sn-glycero-3-phosphate + CoA. It carries out the reaction 1-octadecanoyl-sn-glycero-3-phosphate + (9Z)-octadecenoyl-CoA = 1-octadecanoyl-2-(9Z-octadecenoyl)-sn-glycero-3-phosphate + CoA. It catalyses the reaction 1-(9Z-octadecenoyl)-sn-glycero-3-phosphate + (5Z,8Z,11Z,14Z)-eicosatetraenoyl-CoA = 1-(9Z)-octadecenoyl-2-(5Z,8Z,11Z,14Z)-eicosatetraenoyl-sn-glycero-3-phosphate + CoA. The enzyme catalyses heptadecanoyl-CoA + 1-(9Z-octadecenoyl)-sn-glycero-3-phosphate = 1-(9Z)-octadecenoyl-2-heptadecanoyl-sn-glycero-3-phosphate + CoA. The catalysed reaction is 1-(9Z-octadecenoyl)-sn-glycero-3-phosphocholine + (5Z,8Z,11Z,14Z)-eicosatetraenoyl-CoA = 1-(9Z)-octadecenoyl-2-(5Z,8Z,11Z,14Z)-icosatetraenoyl-sn-glycero-3-phosphocholine + CoA. It carries out the reaction 1-(9Z-octadecenoyl)-sn-glycero-3-phosphate + (9Z)-octadecenoyl-CoA = 1,2-di-(9Z-octadecenoyl)-sn-glycero-3-phosphate + CoA. It catalyses the reaction 1-(9Z-octadecenoyl)-sn-glycero-3-phosphate + hexadecanoyl-CoA = 1-hexadecanoyl-2-(9Z-octadecenoyl)-sn-glycero-3-phosphate + CoA. Its pathway is phospholipid metabolism; CDP-diacylglycerol biosynthesis; CDP-diacylglycerol from sn-glycerol 3-phosphate: step 2/3. Converts 1-acyl-sn-glycerol-3-phosphate (lysophosphatidic acid or LPA) into 1,2-diacyl-sn-glycerol-3-phosphate (phosphatidic acid or PA) by incorporating an acyl moiety at the sn-2 position of the glycerol backbone. Acts on LPA containing saturated or unsaturated fatty acids C15:0-C20:4 at the sn-1 position using C18:1-CoA as the acyl donor. Also acts on lysophosphatidylethanolamine using oleoyl-CoA, but not arachidonoyl-CoA, and lysophosphatidylinositol using arachidonoyl-CoA, but not oleoyl-CoA. Activity toward lysophosphatidylglycerol not detectable. The polypeptide is 1-acyl-sn-glycerol-3-phosphate acyltransferase epsilon (Agpat5) (Mus musculus (Mouse)).